A 498-amino-acid polypeptide reads, in one-letter code: Putative BTB/POZ domain-containing protein L788 (498 aa).

In terms of domain architecture, BTB spans 28 to 99; that stretch reads TDIILVLEDD…FYGQKIKSGN (72 aa).

It belongs to the mimivirus BTB/WD family.

The chain is Putative BTB/POZ domain-containing protein L788 from Acanthamoeba polyphaga (Amoeba).